We begin with the raw amino-acid sequence, 834 residues long: Pentatricopeptide repeat-containing protein At4g39530 (834 aa).

PPR repeat units lie at residues 78 to 112, 113 to 144, 145 to 181, 182 to 212, 213 to 247, 248 to 282, 283 to 313, 314 to 348, 349 to 383, 384 to 414, 415 to 452, 453 to 487, 488 to 518, 519 to 553, 554 to 588, 589 to 619, 620 to 654, 655 to 689, and 690 to 720; these read DTYL…NLVS, WSTM…KDSP, NEYI…GFDR, DVYV…LPEK, STVT…NVVP, DGYI…GLEM, DASL…MPNK, NIIS…GLKP, DMYA…NLGN, DSYV…FAAA, DVVL…LIRP, SLLT…GLNL, DIFA…MKVK, DLVI…RERP, DEFT…GLEC, NPYI…AASR, DVVC…GIEP, NYIT…GIEP, and ETEH…MPTK. The interval 725-800 is type E motif; sequence VWRSLLSGCA…EPGRSWIGIN (76 aa). The segment at 801–831 is type E(+) motif; the sequence is KEVHIFLSKDKSHCKANQIYEVLDDLLVQIR.

This sequence belongs to the PPR family. PCMP-E subfamily.

This chain is Pentatricopeptide repeat-containing protein At4g39530 (PCMP-E52), found in Arabidopsis thaliana (Mouse-ear cress).